Reading from the N-terminus, the 1499-residue chain is Collagen alpha-2(V) chain (1499 aa).

The N-terminal stretch at 1 to 26 is a signal peptide; that stretch reads MMANWAEARPLLILIVLLGQFVSIKA. The VWFC domain maps to 39–97; it reads IACTQNGQMYLNRDIWKPAPCQICVCDNGAILCDKIECQDVLDCADPVTPPGECCPVCS. Residues 104-1268 form a disordered region; sequence NTNFGRGRKG…DDKNKTDPGV (1165 aa). Over residues 170–182 the composition is skewed to pro residues; that stretch reads PGAPGPPGHPSHP. Over residues 212 to 227 the composition is skewed to low complexity; sequence PGSVGPVGPRGPQGLQ. The span at 236 to 248 shows a compositional bias: pro residues; sequence TGPPGEPGDPGPM. A hydroxyproline mark is found at proline 290, proline 293, and proline 296. Low complexity-rich tracts occupy residues 322 to 340 and 427 to 443; these read EAGP…PRGM and TPGA…SGPP. Residues 506-508 carry the Cell attachment site motif; the sequence is RGD. 2 stretches are compositionally biased toward low complexity: residues 604–626 and 694–709; these read SIGI…SGDP and DQGV…PLGP. Hydroxyproline occurs at positions 611 and 617. A compositionally biased stretch (basic and acidic residues) spans 710 to 721; the sequence is RGERGNPGERGE. Residues 732-741 show a composition bias toward gly residues; the sequence is GMAGGHGPDG. Low complexity predominate over residues 742–758; sequence PKGSPGPSGTPGDTGPP. Positions 776–787 are enriched in basic and acidic residues; that stretch reads KGDRGGIGEKGA. Residues 826-841 show a composition bias toward low complexity; sequence PPGSRGNPGSRGENGP. The segment covering 894-903 has biased composition (gly residues); sequence GLKGGRGTQG. The residue at position 919 (proline 919) is a 3-hydroxyproline; partial. Pro residues predominate over residues 919 to 929; the sequence is PPGPAGAPGPA. 6 consecutive short sequence motifs (cell attachment site) follow at residues 944–946, 1067–1069, 1070–1072, 1100–1102, 1127–1129, and 1136–1138; these read RGD. Positions 1063 to 1072 are enriched in basic and acidic residues; the sequence is AVGERGDRGD. Residues 1093-1114 show a composition bias toward low complexity; it reads APGDAGQRGDPGSRGPIGPPGR. Over residues 1127–1141 the composition is skewed to basic and acidic residues; the sequence is RGDKGDHGDRGDRGQ. 3-hydroxyproline; partial is present on proline 1156. 2 stretches are compositionally biased toward pro residues: residues 1171 to 1181 and 1211 to 1226; these read PFGPRGPPGPV and EGPP…PGPP. Positions 1230 to 1499 are cleaved as a propeptide — C-terminal propeptide; it reads TAALGDIMGH…GVEIGPVCFV (270 aa). A glycan (N-linked (GlcNAc...) asparagine) is linked at asparagine 1262. In terms of domain architecture, Fibrillar collagen NC1 spans 1266-1499; sequence PGVHATLKSL…GVEIGPVCFV (234 aa). 3 cysteine pairs are disulfide-bonded: cysteine 1296-cysteine 1328, cysteine 1336-cysteine 1497, and cysteine 1405-cysteine 1450. Ca(2+) contacts are provided by aspartate 1314, asparagine 1316, glutamine 1317, and aspartate 1322. Asparagine 1400 is a glycosylation site (N-linked (GlcNAc...) asparagine).

It belongs to the fibrillar collagen family. In terms of assembly, trimers of two alpha 1(V) and one alpha 2(V) chains in most tissues and trimers of one alpha 1(V), one alpha 2(V), and one alpha 3(V) chains in placenta. Prolines at the third position of the tripeptide repeating unit (G-X-P) are hydroxylated in some or all of the chains. Probably 3-hydroxylated on Pro-919 and Pro-1156 by LEPREL1.

The protein resides in the secreted. Its subcellular location is the extracellular space. It localises to the extracellular matrix. Its function is as follows. Type V collagen is a member of group I collagen (fibrillar forming collagen). It is a minor connective tissue component of nearly ubiquitous distribution. Type V collagen binds to DNA, heparan sulfate, thrombospondin, heparin, and insulin. Type V collagen is a key determinant in the assembly of tissue-specific matrices. The chain is Collagen alpha-2(V) chain (COL5A2) from Homo sapiens (Human).